Here is a 466-residue protein sequence, read N- to C-terminus: 3-isopropylmalate dehydratase large subunit (466 aa).

Positions 347, 407, and 410 each coordinate [4Fe-4S] cluster.

This sequence belongs to the aconitase/IPM isomerase family. LeuC type 1 subfamily. Heterodimer of LeuC and LeuD. [4Fe-4S] cluster is required as a cofactor.

The catalysed reaction is (2R,3S)-3-isopropylmalate = (2S)-2-isopropylmalate. It participates in amino-acid biosynthesis; L-leucine biosynthesis; L-leucine from 3-methyl-2-oxobutanoate: step 2/4. Catalyzes the isomerization between 2-isopropylmalate and 3-isopropylmalate, via the formation of 2-isopropylmaleate. In Klebsiella pneumoniae subsp. pneumoniae (strain ATCC 700721 / MGH 78578), this protein is 3-isopropylmalate dehydratase large subunit.